The chain runs to 32 residues: Acyclotide phyb-M (32 aa).

The residue at position 1 (glutamine 1) is a Pyrrolidone carboxylic acid. Cystine bridges form between cysteine 5-cysteine 21, cysteine 9-cysteine 23, and cysteine 14-cysteine 28.

Post-translationally, contains 3 disulfide bonds. Expressed in midvein, lamina and periphery of leaves (at protein level).

Functionally, probably participates in a plant defense mechanism. The protein is Acyclotide phyb-M of Petunia hybrida (Petunia).